A 239-amino-acid polypeptide reads, in one-letter code: MSEVTTNEYNEDGKLIRKIRSFVRREGRLTKGQENAMKECWPTMGIDYQKQLLDWKEVFGNDNPVVLEIGFGMGASLVEMAKNAPEKNFFGIEVHSPGVGACLSDAREAGISNLRVMCHDAVEVFEHMIPNDSLATLQLFFPDPWHKKRHHKRRIVQLEFAEMVRQKLIPNEGIFHMATDWENYAEHMIEIMNQAPGYRNIAEAGDYIPRPEERPLTKFEARGHRLGHGVWDIKFKRVS.

Positions 68, 93, 120, and 143 each coordinate S-adenosyl-L-methionine. D143 is an active-site residue. Residues K147, D180, and 217 to 220 contribute to the substrate site; that span reads TKFE.

Belongs to the class I-like SAM-binding methyltransferase superfamily. TrmB family.

It catalyses the reaction guanosine(46) in tRNA + S-adenosyl-L-methionine = N(7)-methylguanosine(46) in tRNA + S-adenosyl-L-homocysteine. It functions in the pathway tRNA modification; N(7)-methylguanine-tRNA biosynthesis. Functionally, catalyzes the formation of N(7)-methylguanine at position 46 (m7G46) in tRNA. This chain is tRNA (guanine-N(7)-)-methyltransferase, found in Vibrio vulnificus (strain CMCP6).